A 543-amino-acid chain; its full sequence is Thiamine transport system permease protein ThiP (543 aa).

12 helical membrane passes run 19 to 39, 64 to 84, 102 to 122, 142 to 162, 205 to 225, 250 to 270, 300 to 320, 343 to 363, 379 to 399, 406 to 426, 468 to 488, and 510 to 530; these read VAGG…LLAL, FTIW…IPIA, LFAL…TSIY, DIYG…PLAV, GMIG…LTLG, AVAL…ILRL, IIVI…VVVS, LALG…LVAA, GASL…FILL, FVMA…PFAV, GMAF…IALF, and FDAA…MMIA. The ABC transmembrane type-1 1 domain occupies 62-266; the sequence is ARFTIWQAVA…QLALTLLILL (205 aa). The ABC transmembrane type-1 2 domain maps to 339-530; it reads IATSLALGFS…VLCLALMMIA (192 aa).

This sequence belongs to the binding-protein-dependent transport system permease family. CysTW subfamily. In terms of assembly, the complex is composed of two ATP-binding proteins (ThiQ), two transmembrane proteins (ThiP) and a solute-binding protein (ThiB).

The protein localises to the cell inner membrane. In terms of biological role, part of the ABC transporter complex ThiBPQ involved in thiamine import. Probably responsible for the translocation of the substrate across the membrane. The polypeptide is Thiamine transport system permease protein ThiP (thiP) (Brucella suis biovar 1 (strain 1330)).